The following is a 271-amino-acid chain: Tryptophan synthase alpha chain (271 aa).

Catalysis depends on proton acceptor residues E49 and D60.

The protein belongs to the TrpA family. Tetramer of two alpha and two beta chains.

The catalysed reaction is (1S,2R)-1-C-(indol-3-yl)glycerol 3-phosphate + L-serine = D-glyceraldehyde 3-phosphate + L-tryptophan + H2O. It functions in the pathway amino-acid biosynthesis; L-tryptophan biosynthesis; L-tryptophan from chorismate: step 5/5. The alpha subunit is responsible for the aldol cleavage of indoleglycerol phosphate to indole and glyceraldehyde 3-phosphate. This Burkholderia mallei (strain NCTC 10247) protein is Tryptophan synthase alpha chain.